A 147-amino-acid chain; its full sequence is Peptide methionine sulfoxide reductase MsrB (147 aa).

The segment covering 1–11 (MPKIVKKEPKF) has biased composition (basic and acidic residues). Positions 1–25 (MPKIVKKEPKFVEQSGKKVTKSDEQ) are disordered. The MsrB domain maps to 23–145 (DEQWREQLSD…NSVSLIFNKS (123 aa)). Zn(2+) contacts are provided by Cys62, Cys65, Cys111, and Cys114. Cys134 acts as the Nucleophile in catalysis.

Belongs to the MsrB Met sulfoxide reductase family. Requires Zn(2+) as cofactor.

The catalysed reaction is L-methionyl-[protein] + [thioredoxin]-disulfide + H2O = L-methionyl-(R)-S-oxide-[protein] + [thioredoxin]-dithiol. In Vibrio parahaemolyticus serotype O3:K6 (strain RIMD 2210633), this protein is Peptide methionine sulfoxide reductase MsrB.